The chain runs to 216 residues: LexA repressor (216 aa).

The H-T-H motif DNA-binding region spans 29–49 (RAEIAQALGFRSPNAAEDHLK). Residues serine 134 and lysine 171 each act as for autocatalytic cleavage activity in the active site.

This sequence belongs to the peptidase S24 family. Homodimer.

The catalysed reaction is Hydrolysis of Ala-|-Gly bond in repressor LexA.. Its function is as follows. Represses a number of genes involved in the response to DNA damage (SOS response), including recA and lexA. In the presence of single-stranded DNA, RecA interacts with LexA causing an autocatalytic cleavage which disrupts the DNA-binding part of LexA, leading to derepression of the SOS regulon and eventually DNA repair. The polypeptide is LexA repressor (Bordetella bronchiseptica (strain ATCC BAA-588 / NCTC 13252 / RB50) (Alcaligenes bronchisepticus)).